The chain runs to 158 residues: Cyclic pyranopterin monophosphate synthase (158 aa).

Substrate contacts are provided by residues leucine 76–histidine 78 and methionine 114–glutamate 115. The active site involves aspartate 129.

The protein belongs to the MoaC family. As to quaternary structure, homohexamer; trimer of dimers.

It carries out the reaction (8S)-3',8-cyclo-7,8-dihydroguanosine 5'-triphosphate = cyclic pyranopterin phosphate + diphosphate. Its pathway is cofactor biosynthesis; molybdopterin biosynthesis. Catalyzes the conversion of (8S)-3',8-cyclo-7,8-dihydroguanosine 5'-triphosphate to cyclic pyranopterin monophosphate (cPMP). In Shewanella woodyi (strain ATCC 51908 / MS32), this protein is Cyclic pyranopterin monophosphate synthase.